We begin with the raw amino-acid sequence, 577 residues long: Sulfite reductase [NADPH] hemoprotein beta-component (577 aa).

[4Fe-4S] cluster is bound by residues Cys440, Cys446, Cys486, and Cys490. Cys490 serves as a coordination point for siroheme.

This sequence belongs to the nitrite and sulfite reductase 4Fe-4S domain family. In terms of assembly, alpha(8)-beta(8). The alpha component is a flavoprotein, the beta component is a hemoprotein. Requires siroheme as cofactor. [4Fe-4S] cluster serves as cofactor.

The catalysed reaction is hydrogen sulfide + 3 NADP(+) + 3 H2O = sulfite + 3 NADPH + 4 H(+). Its pathway is sulfur metabolism; hydrogen sulfide biosynthesis; hydrogen sulfide from sulfite (NADPH route): step 1/1. Functionally, component of the sulfite reductase complex that catalyzes the 6-electron reduction of sulfite to sulfide. This is one of several activities required for the biosynthesis of L-cysteine from sulfate. This chain is Sulfite reductase [NADPH] hemoprotein beta-component, found in Vibrio cholerae serotype O1 (strain ATCC 39541 / Classical Ogawa 395 / O395).